Here is a 99-residue protein sequence, read N- to C-terminus: Putative RNA-binding protein RbpE (99 aa).

Residues 2–79 (SIYVGNLSYS…RVLKVNKARP (78 aa)) form the RRM domain. The disordered stretch occupies residues 78-99 (RPREEKGARSGGGSWSRNNGGY). Residues 86–99 (RSGGGSWSRNNGGY) are compositionally biased toward gly residues.

In Nostoc sp. (strain PCC 7120 / SAG 25.82 / UTEX 2576), this protein is Putative RNA-binding protein RbpE (rbpE).